A 312-amino-acid polypeptide reads, in one-letter code: 2,3-dihydroxyphenylpropionate/2,3-dihydroxicinnamic acid 1,2-dioxygenase (312 aa).

The Proton donor role is filled by histidine 115. Histidine 179 acts as the Proton acceptor in catalysis.

Belongs to the LigB/MhpB extradiol dioxygenase family. As to quaternary structure, homotetramer. It depends on Fe(2+) as a cofactor.

It catalyses the reaction 3-(2,3-dihydroxyphenyl)propanoate + O2 = (2Z,4E)-2-hydroxy-6-oxonona-2,4-dienedioate + H(+). The enzyme catalyses (2E)-3-(2,3-dihydroxyphenyl)prop-2-enoate + O2 = (2Z,4E,7E)-2-hydroxy-6-oxonona-2,4,7-trienedioate + H(+). It participates in aromatic compound metabolism; 3-phenylpropanoate degradation. In terms of biological role, catalyzes the non-heme iron(II)-dependent oxidative cleavage of 2,3-dihydroxyphenylpropionic acid and 2,3-dihydroxicinnamic acid into 2-hydroxy-6-ketononadienedioate and 2-hydroxy-6-ketononatrienedioate, respectively. This Azotobacter vinelandii (strain DJ / ATCC BAA-1303) protein is 2,3-dihydroxyphenylpropionate/2,3-dihydroxicinnamic acid 1,2-dioxygenase.